A 217-amino-acid polypeptide reads, in one-letter code: 3-isopropylmalate dehydratase small subunit (217 aa).

This sequence belongs to the LeuD family. LeuD type 1 subfamily. In terms of assembly, heterodimer of LeuC and LeuD.

The catalysed reaction is (2R,3S)-3-isopropylmalate = (2S)-2-isopropylmalate. Its pathway is amino-acid biosynthesis; L-leucine biosynthesis; L-leucine from 3-methyl-2-oxobutanoate: step 2/4. Functionally, catalyzes the isomerization between 2-isopropylmalate and 3-isopropylmalate, via the formation of 2-isopropylmaleate. The sequence is that of 3-isopropylmalate dehydratase small subunit from Paraburkholderia phymatum (strain DSM 17167 / CIP 108236 / LMG 21445 / STM815) (Burkholderia phymatum).